A 325-amino-acid chain; its full sequence is Hydroxymethylglutaryl-CoA lyase, mitochondrial (325 aa).

Residues 1-27 (MATVRKAFPQRLVGLASLRAASTSSMG) constitute a mitochondrion transit peptide. The Pyruvate carboxyltransferase domain maps to 33–300 (VKIVEVGPRD…HTGVNLQKLL (268 aa)). Position 41 (Arg41) interacts with substrate. Asp42 lines the a divalent metal cation pocket. At Lys48 the chain carries N6-acetyllysine; alternate. Lys48 is subject to N6-succinyllysine; alternate. Residue Lys111 is modified to N6-acetyllysine. N6-acetyllysine; alternate is present on residues Lys137 and Lys179. N6-succinyllysine; alternate is present on residues Lys137 and Lys179. His233 and His235 together coordinate a divalent metal cation. The active site involves Cys266. Position 275 (Asn275) interacts with a divalent metal cation. The Microbody targeting signal signature appears at 323-325 (CKL). Lys324 carries the post-translational modification N6-acetyllysine.

Belongs to the HMG-CoA lyase family. As to quaternary structure, homodimer; disulfide-linked. Can also form homotetramers. In suckling rat, highest levels in liver and in intestine. Lower levels in heart, kidney and cerebellum. Weak expression in brain cortex, medulla and midbrain. Levels decrease slightly during weaning.

Its subcellular location is the mitochondrion matrix. It is found in the peroxisome. It catalyses the reaction (3S)-3-hydroxy-3-methylglutaryl-CoA = acetoacetate + acetyl-CoA. It functions in the pathway metabolic intermediate metabolism; (S)-3-hydroxy-3-methylglutaryl-CoA degradation; acetoacetate from (S)-3-hydroxy-3-methylglutaryl-CoA: step 1/1. Its function is as follows. Mitochondrial 3-hydroxy-3-methylglutaryl-CoA lyase that catalyzes a cation-dependent cleavage of (S)-3-hydroxy-3-methylglutaryl-CoA into acetyl-CoA and acetoacetate, a key step in ketogenesis. Terminal step in leucine catabolism. Ketone bodies (beta-hydroxybutyrate, acetoacetate and acetone) are essential as an alternative source of energy to glucose, as lipid precursors and as regulators of metabolism. The polypeptide is Hydroxymethylglutaryl-CoA lyase, mitochondrial (Hmgcl) (Rattus norvegicus (Rat)).